Consider the following 585-residue polypeptide: Glycerol-3-phosphate acyltransferase 1 (585 aa).

3 consecutive transmembrane segments (helical) span residues 126–146 (FFPYFMLVAFEGGSIIRAILL), 334–354 (TPLATLAMFIWLPIGFLLAVF), and 356–376 (ISVGVFLPYHVANFLASMSGV). Positions 403–408 (HRTLLD) match the HXXXXD motif motif.

The protein belongs to the GPAT/DAPAT family. As to expression, highly expressed in developing siliques and flower buds. Weakly or not expressed in roots, seedlings and leaves.

It is found in the membrane. Its subcellular location is the mitochondrion. It catalyses the reaction sn-glycerol 3-phosphate + an acyl-CoA = a 1-acyl-sn-glycero-3-phosphate + CoA. The protein operates within phospholipid metabolism; CDP-diacylglycerol biosynthesis; CDP-diacylglycerol from sn-glycerol 3-phosphate: step 1/3. Its function is as follows. Esterifies acyl-group from acyl-ACP to the sn-1 position of glycerol-3-phosphate, an essential step in glycerolipid biosynthesis. Involved in pollen development, by being required for tapetum differentiation and male fertility. In addition to the sporophytic effect, it also exerts a gametophytic effect on pollen performance. This Arabidopsis thaliana (Mouse-ear cress) protein is Glycerol-3-phosphate acyltransferase 1 (GPAT1).